The sequence spans 107 residues: Phosphoribosyl-ATP pyrophosphatase (107 aa).

The protein belongs to the PRA-PH family.

The protein localises to the cytoplasm. It catalyses the reaction 1-(5-phospho-beta-D-ribosyl)-ATP + H2O = 1-(5-phospho-beta-D-ribosyl)-5'-AMP + diphosphate + H(+). The protein operates within amino-acid biosynthesis; L-histidine biosynthesis; L-histidine from 5-phospho-alpha-D-ribose 1-diphosphate: step 2/9. The protein is Phosphoribosyl-ATP pyrophosphatase of Bacillus cereus (strain AH187).